The following is a 221-amino-acid chain: Sperm acrosome membrane-associated protein 3 (221 aa).

The Cytoplasmic portion of the chain corresponds to 1 to 69 (MGICMSMYTQ…EARSRAPRRQ (69 aa)). A helical; Signal-anchor for type II membrane protein membrane pass occupies residues 70–90 (LCPPGITWLALAYLLSCLLAS). Residues 91–221 (SKAKVFSRCE…LSDWVDGCDF (131 aa)) lie on the Extracellular side of the membrane. In terms of domain architecture, C-type lysozyme spans 94–221 (KVFSRCELAK…LSDWVDGCDF (128 aa)). 4 disulfide bridges follow: cysteine 99–cysteine 219, cysteine 123–cysteine 207, cysteine 157–cysteine 172, and cysteine 168–cysteine 186.

Belongs to the glycosyl hydrolase 22 family. In terms of assembly, interacts with ASTL. As to expression, the processed form is expressed in sperm (at protein level). Expressed strongly in testis and epididymis and weakly in pancreas.

It is found in the cytoplasmic vesicle. Its subcellular location is the secretory vesicle. The protein resides in the acrosome membrane. It localises to the secreted. Functionally, sperm surface membrane protein that may be involved in sperm-egg plasma membrane adhesion and fusion during fertilization. It could be a potential receptor for the egg oligosaccharide residue N-acetylglucosamine, which is present in the extracellular matrix over the egg plasma membrane. The processed form has no detectable bacteriolytic activity in vitro. This chain is Sperm acrosome membrane-associated protein 3 (Spaca3), found in Mus musculus (Mouse).